A 196-amino-acid chain; its full sequence is Phosphatidyl-N-methylethanolamine N-methyltransferase (196 aa).

Met-1 is a topological domain (lumenal). Residues Ala-2–Ala-28 constitute an intramembrane region (helical). The Lumenal portion of the chain corresponds to Arg-29–Leu-40. A helical transmembrane segment spans residues Ala-41–Val-62. Over Arg-63–Ala-89 the chain is Cytoplasmic. Residues Lys-90–Val-110 traverse the membrane as a helical segment. Residue Cys-94–Gly-96 coordinates S-adenosyl-L-methionine. Residues Gly-111–Tyr-153 are Lumenal-facing. The chain crosses the membrane as a helical span at residues Gly-154–Lys-174. At Phe-175–Glu-196 the chain is on the cytoplasmic side. Residue Glu-176–Glu-177 participates in S-adenosyl-L-methionine binding.

It belongs to the class VI-like SAM-binding methyltransferase superfamily. PEMT/PEM2 methyltransferase family.

It localises to the endoplasmic reticulum membrane. Its subcellular location is the mitochondrion membrane. It carries out the reaction a 1,2-diacyl-sn-glycero-3-phospho-N-methylethanolamine + S-adenosyl-L-methionine = a 1,2-diacyl-sn-glycero-3-phospho-N,N-dimethylethanolamine + S-adenosyl-L-homocysteine + H(+). The catalysed reaction is a 1,2-diacyl-sn-glycero-3-phospho-N,N-dimethylethanolamine + S-adenosyl-L-methionine = a 1,2-diacyl-sn-glycero-3-phosphocholine + S-adenosyl-L-homocysteine + H(+). It functions in the pathway phospholipid metabolism; phosphatidylcholine biosynthesis. Catalyzes the second two steps of the methylation pathway of phosphatidylcholine biosynthesis, the SAM-dependent methylation of phosphatidylmonomethylethanolamine (PMME) to phosphatidyldimethylethanolamine (PDME) and of PDME to phosphatidylcholine (PC). The protein is Phosphatidyl-N-methylethanolamine N-methyltransferase of Schizosaccharomyces pombe (strain 972 / ATCC 24843) (Fission yeast).